Reading from the N-terminus, the 262-residue chain is Acyl-[acyl-carrier-protein]--UDP-N-acetylglucosamine O-acyltransferase (262 aa).

This sequence belongs to the transferase hexapeptide repeat family. LpxA subfamily. As to quaternary structure, homotrimer.

It is found in the cytoplasm. It catalyses the reaction a (3R)-hydroxyacyl-[ACP] + UDP-N-acetyl-alpha-D-glucosamine = a UDP-3-O-[(3R)-3-hydroxyacyl]-N-acetyl-alpha-D-glucosamine + holo-[ACP]. It participates in glycolipid biosynthesis; lipid IV(A) biosynthesis; lipid IV(A) from (3R)-3-hydroxytetradecanoyl-[acyl-carrier-protein] and UDP-N-acetyl-alpha-D-glucosamine: step 1/6. Involved in the biosynthesis of lipid A, a phosphorylated glycolipid that anchors the lipopolysaccharide to the outer membrane of the cell. This Yersinia enterocolitica serotype O:8 / biotype 1B (strain NCTC 13174 / 8081) protein is Acyl-[acyl-carrier-protein]--UDP-N-acetylglucosamine O-acyltransferase.